Here is an 871-residue protein sequence, read N- to C-terminus: MDGESEVDFSSNSITPLWRRRSIPQPHQVLGRSKPRPQSYQSPNGLLITDFPVEDGGTLLAAQIPAQVPTASDSRTVHRSPLLLGAQRRAVANGGTASPEYRAASPRLRRPKSPKLPKAVPGGSPKSPANGAVTLPAPPPPPVLRPPRTPNAPAPCTPEEDLTGLTASPVPSPTANGLAANNDSPGSGSQSGRKAKDPERGLFPGPQKSSSEQKLPLQRLPSQENELLENPSVVLSTNSPAALKVGKQQIIPKSLASEIKISKSNNQNVEPHKRLLKVRSMVEGLGGPLGHAGEESEVDNDVDSPGSLRRGLRSTSYRRAVVSGFDFDSPTSSKKKNRMSQPVLKVVMEDKEKFSSLGRIKKKMLKGQGTFDGEENAVLYQNYKEKALDIDSDEESEPKEQKSDEKIVIHHKPLRSTWSQLSAVKRKGLSQTVSQEERKRQEAIFEVISSEHSYLLSLEILIRMFKNSKELSDTMTKTERHHLFSNITDVCEASKKFFIELEARHQNNIFIDDISDIVEKHTASTFDPYVKYCTNEVYQQRTLQKLLATNPSFKEVLSRIESHEDCRNLPMISFLILPMQRVTRLPLLMDTICQKTPKDSPKYEVCKRALKEVSKLVRLCNEGARKMERTEMMYTINSQLEFKIKPFPLVSSSRWLVKRGELTAYVEDTVLFSRRTSKQQVYFFLFNDVLIITKKKSEESYNVNDYSLRDQLLVESCDNEELNSSPGKNSSTMLYSRQSSASHLFTLTVLSNHANEKVEMLLGAETQSERARWITALGHSSGKPPADRTSLTQVEIVRSFTAKQPDELSLQVADVVLIYQRVSDGWYEGERLRDGERGWFPMECAKEITCQATIDKNVERMGRLLGLETNV.

Disordered stretches follow at residues 1 to 49, 86 to 233, and 288 to 310; these read MDGE…LLIT, AQRR…NPSV, and PLGH…SLRR. Serine 22 carries the phosphoserine modification. A compositionally biased stretch (pro residues) spans 136–156; the sequence is PAPPPPPVLRPPRTPNAPAPC. A compositionally biased stretch (polar residues) spans 173-192; the sequence is PTANGLAANNDSPGSGSQSG. Position 392 is a phosphoserine (serine 392). A DH domain is found at 439–623; it reads KRQEAIFEVI…SKLVRLCNEG (185 aa). A PH domain is found at 655–782; sequence WLVKRGELTA…WITALGHSSG (128 aa). The 62-residue stretch at 789 to 850 folds into the SH3 domain; sequence TSLTQVEIVR…PMECAKEITC (62 aa).

As to quaternary structure, interacts with ICAM1 and RHOG. As to expression, isoform 1 is broadly expressed, with highest levels in liver (at protein level). Certain mRNA species appear to be specifically expressed in prostate and liver.

It localises to the cell projection. The protein localises to the ruffle. Its function is as follows. Activates RhoG GTPase by promoting the exchange of GDP by GTP. Required for the formation of membrane ruffles during macropinocytosis. Required for the formation of cup-like structures during trans-endothelial migration of leukocytes. In case of Salmonella enterica infection, activated by SopB, which induces cytoskeleton rearrangements and promotes bacterial entry. This is Rho guanine nucleotide exchange factor 26 (ARHGEF26) from Homo sapiens (Human).